A 496-amino-acid chain; its full sequence is Glutamate--tRNA ligase 2 (496 aa).

Positions 13-23 (PSPTGRLHVGG) match the 'HIGH' region motif. The short motif at 255–259 (KLSKR) is the 'KMSKS' region element. Position 258 (Lys-258) interacts with ATP.

Belongs to the class-I aminoacyl-tRNA synthetase family. Glutamate--tRNA ligase type 1 subfamily. As to quaternary structure, monomer.

It is found in the cytoplasm. It catalyses the reaction tRNA(Glu) + L-glutamate + ATP = L-glutamyl-tRNA(Glu) + AMP + diphosphate. Its function is as follows. Catalyzes the attachment of glutamate to tRNA(Glu) in a two-step reaction: glutamate is first activated by ATP to form Glu-AMP and then transferred to the acceptor end of tRNA(Glu). This chain is Glutamate--tRNA ligase 2, found in Rubrobacter xylanophilus (strain DSM 9941 / JCM 11954 / NBRC 16129 / PRD-1).